The following is a 320-amino-acid chain: Rhomboid-like protein 17, chloroplastic (320 aa).

Residues 1–87 (MHAIFSSFSR…LKFGNVMESR (87 aa)) constitute a chloroplast transit peptide. Transmembrane regions (helical) follow at residues 116–136 (WING…AVFT), 160–180 (LITS…MIGI), 199–219 (LYFA…ALLA), 247–267 (MFAI…YFAL), and 295–315 (IASS…WARI).

It belongs to the peptidase S54 family.

The protein resides in the plastid. Its subcellular location is the chloroplast membrane. Functionally, probable rhomboid-type serine protease that catalyzes intramembrane proteolysis. This chain is Rhomboid-like protein 17, chloroplastic, found in Arabidopsis thaliana (Mouse-ear cress).